Here is a 431-residue protein sequence, read N- to C-terminus: 3-phosphoshikimate 1-carboxyvinyltransferase (431 aa).

3 residues coordinate 3-phosphoshikimate: K26, S27, and R31. K26 contacts phosphoenolpyruvate. Phosphoenolpyruvate-binding residues include G99 and R127. Residues S170, S171, Q172, S199, E314, and H343 each contribute to the 3-phosphoshikimate site. Q172 serves as a coordination point for phosphoenolpyruvate. Catalysis depends on E314, which acts as the Proton acceptor. Residues R347, R388, and K413 each contribute to the phosphoenolpyruvate site.

Belongs to the EPSP synthase family. As to quaternary structure, monomer.

The protein resides in the cytoplasm. The enzyme catalyses 3-phosphoshikimate + phosphoenolpyruvate = 5-O-(1-carboxyvinyl)-3-phosphoshikimate + phosphate. It functions in the pathway metabolic intermediate biosynthesis; chorismate biosynthesis; chorismate from D-erythrose 4-phosphate and phosphoenolpyruvate: step 6/7. Catalyzes the transfer of the enolpyruvyl moiety of phosphoenolpyruvate (PEP) to the 5-hydroxyl of shikimate-3-phosphate (S3P) to produce enolpyruvyl shikimate-3-phosphate and inorganic phosphate. The sequence is that of 3-phosphoshikimate 1-carboxyvinyltransferase from Mycobacterium ulcerans (strain Agy99).